Reading from the N-terminus, the 284-residue chain is L-ribulose-5-phosphate 3-epimerase UlaE (284 aa).

It belongs to the L-ribulose-5-phosphate 3-epimerase family.

It catalyses the reaction L-ribulose 5-phosphate = L-xylulose 5-phosphate. Its pathway is cofactor degradation; L-ascorbate degradation; D-xylulose 5-phosphate from L-ascorbate: step 3/4. Its function is as follows. Catalyzes the isomerization of L-xylulose-5-phosphate to L-ribulose-5-phosphate. Is involved in the anaerobic L-ascorbate utilization. In Escherichia coli (strain 55989 / EAEC), this protein is L-ribulose-5-phosphate 3-epimerase UlaE.